Consider the following 512-residue polypeptide: Maturase K (512 aa).

It belongs to the intron maturase 2 family. MatK subfamily.

The protein localises to the plastid. It localises to the chloroplast. In terms of biological role, usually encoded in the trnK tRNA gene intron. Probably assists in splicing its own and other chloroplast group II introns. This Filarum manserichense protein is Maturase K.